The following is a 131-amino-acid chain: Arsenate reductase (131 aa).

Catalysis depends on nucleophile residues cysteine 10, cysteine 82, and cysteine 89. Cystine bridges form between cysteine 10–cysteine 82 and cysteine 82–cysteine 89.

Belongs to the low molecular weight phosphotyrosine protein phosphatase family. Thioredoxin-coupled ArsC subfamily.

The protein resides in the cytoplasm. The catalysed reaction is arsenate + [thioredoxin]-dithiol + H(+) = arsenite + [thioredoxin]-disulfide + H2O. Functionally, catalyzes the reduction of arsenate [As(V)] to arsenite [As(III)]. This is Arsenate reductase from Staphylococcus aureus (strain bovine RF122 / ET3-1).